Reading from the N-terminus, the 322-residue chain is Putative MgpC-like protein MPN_367 (322 aa).

A compositionally biased stretch (low complexity) spans 1–48 (MVGSGAAGSASSLQGNGSNSSGLKSLLRSAPVSVPPSSTSNQTLSLSN). Disordered regions lie at residues 1-59 (MVGS…AVVS) and 118-145 (DATS…EPAL). Polar residues predominate over residues 120 to 134 (TSTNLPHAAGASQTG).

This sequence belongs to the MgpC family.

The polypeptide is Putative MgpC-like protein MPN_367 (Mycoplasma pneumoniae (strain ATCC 29342 / M129 / Subtype 1) (Mycoplasmoides pneumoniae)).